An 80-amino-acid polypeptide reads, in one-letter code: Exodeoxyribonuclease 7 small subunit (80 aa).

The tract at residues 60–80 is disordered; that stretch reads LIDSDGTEHNLDPNNASAPEE. A compositionally biased stretch (basic and acidic residues) spans 61 to 70; the sequence is IDSDGTEHNL. Residues 71–80 show a composition bias toward polar residues; it reads DPNNASAPEE.

This sequence belongs to the XseB family. As to quaternary structure, heterooligomer composed of large and small subunits.

It localises to the cytoplasm. The enzyme catalyses Exonucleolytic cleavage in either 5'- to 3'- or 3'- to 5'-direction to yield nucleoside 5'-phosphates.. Functionally, bidirectionally degrades single-stranded DNA into large acid-insoluble oligonucleotides, which are then degraded further into small acid-soluble oligonucleotides. The chain is Exodeoxyribonuclease 7 small subunit from Lactobacillus acidophilus (strain ATCC 700396 / NCK56 / N2 / NCFM).